Reading from the N-terminus, the 328-residue chain is Serine protease 27 (328 aa).

Residues 1–22 (MRQPHIAALLLLPLLLRSGTEG) form the signal peptide. The propeptide at 23–37 (ARTLRACGHPKMFNR) is activation peptide. The 243-residue stretch at 38–280 (MVGGENALEG…HHKWIHQIIP (243 aa)) folds into the Peptidase S1 domain. A disulfide bond links cysteine 63 and cysteine 79. Catalysis depends on histidine 78, which acts as the Charge relay system. Asparagine 82 carries N-linked (GlcNAc...) asparagine glycosylation. The Charge relay system role is filled by aspartate 127. 3 disulfide bridges follow: cysteine 161-cysteine 238, cysteine 194-cysteine 217, and cysteine 228-cysteine 256. The Charge relay system role is filled by serine 232.

Belongs to the peptidase S1 family.

The protein resides in the secreted. The chain is Serine protease 27 (Prss27) from Mus musculus (Mouse).